Reading from the N-terminus, the 468-residue chain is Glucose-dependent insulinotropic receptor (468 aa).

The Extracellular portion of the chain corresponds to 1-6 (MESSFS). Residues 7–27 (FGVILAVLTILIIAVNALVVV) traverse the membrane as a helical segment. The Cytoplasmic segment spans residues 28–37 (AMLLSIYKND). The chain crosses the membrane as a helical span at residues 38–58 (GVGLCFTLNLAVADTLIGVAI). The Extracellular segment spans residues 59–81 (SGLVTDQLSSSAQHTQKTLCSLR). Residues 82–102 (MAFVTSSAAASVLTVMLIAFD) form a helical membrane-spanning segment. Residues 103-125 (RYLAIKQPLRYFQIMNGLVAGGC) are Cytoplasmic-facing. A helical membrane pass occupies residues 126–146 (IAGLWLISYLIGFLPLGVSIF). The Extracellular portion of the chain corresponds to 147–164 (QQTTYHGPCTFFAVFHPR). Residues 165–185 (FVLTLSCAGFFPAVLLFVFFY) traverse the membrane as a helical segment. Over 186–226 (CDMLKIASVHSQHIRKMEHAGAMVGACRPPRPVNDFKAVRT) the chain is Cytoplasmic. Residues 227–247 (VSVLIGSFTLSWSPFLITSIV) form a helical membrane-spanning segment. Topologically, residues 248 to 262 (QVACHKCCLYQVLEK) are extracellular. A helical membrane pass occupies residues 263–283 (YLWLLGVGNSLLNPLIYAYWQ). Residues 284-468 (REVRQQLCHM…MSDPLRTCRG (185 aa)) lie on the Cytoplasmic side of the membrane.

Belongs to the G-protein coupled receptor 1 family. In terms of tissue distribution, expression restricted to the beta-cells of pancreatic islets.

It localises to the cell membrane. Receptor for the endogenous fatty-acid ethanolamide oleoylethanolamide (OEA) and lysophosphatidylcholine (LPC). Functions as a glucose-dependent insulinotropic receptor. The activity of this receptor is mediated by G proteins which activate adenylate cyclase. Seems to act through a G(s) mediated pathway. The chain is Glucose-dependent insulinotropic receptor (Gpr119) from Rattus norvegicus (Rat).